The chain runs to 79 residues: Acyl carrier protein (79 aa).

The Carrier domain maps to 2-77 (ENIEQRVKKI…QAIDYVTAHL (76 aa)). O-(pantetheine 4'-phosphoryl)serine is present on serine 37.

Belongs to the acyl carrier protein (ACP) family. In terms of processing, 4'-phosphopantetheine is transferred from CoA to a specific serine of apo-ACP by AcpS. This modification is essential for activity because fatty acids are bound in thioester linkage to the sulfhydryl of the prosthetic group.

It is found in the cytoplasm. It functions in the pathway lipid metabolism; fatty acid biosynthesis. In terms of biological role, carrier of the growing fatty acid chain in fatty acid biosynthesis. The protein is Acyl carrier protein of Aromatoleum aromaticum (strain DSM 19018 / LMG 30748 / EbN1) (Azoarcus sp. (strain EbN1)).